Here is a 142-residue protein sequence, read N- to C-terminus: Succinate dehydrogenase subunit 6, mitochondrial (142 aa).

In terms of assembly, component of complex II composed of eight subunits in plants: four classical SDH subunits SDH1, SDH2, SDH3 and SDH4 (a flavoprotein (FP), an iron-sulfur protein (IP), and a cytochrome b composed of a large and a small subunit.), as well as four subunits unknown in mitochondria from bacteria and heterotrophic eukaryotes.

The protein localises to the mitochondrion inner membrane. It functions in the pathway carbohydrate metabolism; tricarboxylic acid cycle. This chain is Succinate dehydrogenase subunit 6, mitochondrial, found in Oryza sativa subsp. japonica (Rice).